Reading from the N-terminus, the 221-residue chain is Ras-related protein Rab-27A (221 aa).

N-acetylserine is present on S2. The residue at position 2 (S2) is a Phosphoserine. Position 16-24 (16-24 (GDSGVGKTS)) interacts with GTP. The Effector region signature appears at 38-46 (FITTVGIDF). GTP-binding positions include 74–78 (DTAGQ), 133–136 (NKSD), and 163–165 (SAA). An intrachain disulfide couples C123 to C188. 2 S-geranylgeranyl cysteine lipidation sites follow: C219 and C221. A Cysteine methyl ester modification is found at C221.

The protein belongs to the small GTPase superfamily. Rab family. Binds SYTL1, SLAC2B, MYRIP, SYTL3, SYTL4 and SYTL5. Interacts with RPH3A and RPH3A. Binds MLPH and SYTL2. Interacts with UNC13D. Does not interact with the BLOC-3 complex (heterodimer of HPS1 and HPS4). Interacts (GDP-bound form preferentially) with DENND10. As to expression, high levels in eye, intestine, lung, pancreas and spleen, and low or absent in brain, liver, heart, kidney, and skeletal muscle.

The protein localises to the membrane. Its subcellular location is the melanosome. It is found in the late endosome. It localises to the lysosome. The enzyme catalyses GTP + H2O = GDP + phosphate + H(+). Regulated by guanine nucleotide exchange factors (GEFs) which promote the exchange of bound GDP for free GTP, GTPase activating proteins (GAPs) which increase the GTP hydrolysis activity, and GDP dissociation inhibitors which inhibit the dissociation of the nucleotide from the GTPase. Activated by GEFs such as DENND10. Functionally, small GTPase which cycles between active GTP-bound and inactive GDP-bound states. In its active state, binds to a variety of effector proteins to regulate homeostasis of late endocytic pathway, including endosomal positioning, maturation and secretion. Plays a role in cytotoxic granule exocytosis in lymphocytes. Required for both granule maturation and granule docking and priming at the immunologic synapse. This Rattus norvegicus (Rat) protein is Ras-related protein Rab-27A (Rab27a).